The sequence spans 435 residues: Kynurenine--oxoglutarate transaminase (435 aa).

Positions 46 and 198 each coordinate substrate. Lys-262 is subject to N6-(pyridoxal phosphate)lysine. Arg-413 is a binding site for substrate.

It belongs to the class-I pyridoxal-phosphate-dependent aminotransferase family. As to quaternary structure, homodimer. The cofactor is pyridoxal 5'-phosphate.

It localises to the cytoplasm. The catalysed reaction is L-kynurenine + 2-oxoglutarate = kynurenate + L-glutamate + H2O. It carries out the reaction 3-phenylpyruvate + L-glutamine = 2-oxoglutaramate + L-phenylalanine. It catalyses the reaction an S-substituted L-cysteine + H2O = a thiol + pyruvate + NH4(+). It functions in the pathway amino-acid degradation; L-kynurenine degradation; kynurenate from L-kynurenine: step 1/2. In terms of biological role, catalyzes the irreversible transamination of the L-tryptophan metabolite L-kynurenine to form kynurenic acid (KA). Metabolizes the cysteine conjugates of certain halogenated alkenes and alkanes to form reactive metabolites. Catalyzes the beta-elimination of S-conjugates and Se-conjugates of L-(seleno)cysteine, resulting in the cleavage of the C-S or C-Se bond. In Dictyostelium discoideum (Social amoeba), this protein is Kynurenine--oxoglutarate transaminase (ccbl).